The primary structure comprises 113 residues: Large ribosomal subunit protein bL17 (113 aa).

It belongs to the bacterial ribosomal protein bL17 family. In terms of assembly, part of the 50S ribosomal subunit. Contacts protein L32.

This Clostridioides difficile (strain 630) (Peptoclostridium difficile) protein is Large ribosomal subunit protein bL17.